Reading from the N-terminus, the 411-residue chain is Phosphoribosylaminoimidazole-succinocarboxamide synthase, chloroplastic (411 aa).

The N-terminal 53 residues, 1–53 (MAQCVRSTLNPVRTPQSFTRKAYVKSPAFASVSFLRAVPEFNKYPKPCSLVMS), are a transit peptide targeting the chloroplast.

The protein belongs to the SAICAR synthetase family.

The protein resides in the plastid. It localises to the chloroplast. The catalysed reaction is 5-amino-1-(5-phospho-D-ribosyl)imidazole-4-carboxylate + L-aspartate + ATP = (2S)-2-[5-amino-1-(5-phospho-beta-D-ribosyl)imidazole-4-carboxamido]succinate + ADP + phosphate + 2 H(+). It functions in the pathway purine metabolism; IMP biosynthesis via de novo pathway; 5-amino-1-(5-phospho-D-ribosyl)imidazole-4-carboxamide from 5-amino-1-(5-phospho-D-ribosyl)imidazole-4-carboxylate: step 1/2. The sequence is that of Phosphoribosylaminoimidazole-succinocarboxamide synthase, chloroplastic (PUR7) from Arabidopsis thaliana (Mouse-ear cress).